Here is a 487-residue protein sequence, read N- to C-terminus: 3-octaprenyl-4-hydroxybenzoate carboxy-lyase (487 aa).

Asn172 is a Mn(2+) binding site. Residues 175 to 177 (IYR), 189 to 191 (RWL), and 194 to 195 (RG) each bind prenylated FMN. Glu238 lines the Mn(2+) pocket. The Proton donor role is filled by Asp287.

Belongs to the UbiD family. As to quaternary structure, homohexamer. Prenylated FMN is required as a cofactor. It depends on Mn(2+) as a cofactor.

The protein resides in the cell membrane. It carries out the reaction a 4-hydroxy-3-(all-trans-polyprenyl)benzoate + H(+) = a 2-(all-trans-polyprenyl)phenol + CO2. It functions in the pathway cofactor biosynthesis; ubiquinone biosynthesis. In terms of biological role, catalyzes the decarboxylation of 3-octaprenyl-4-hydroxy benzoate to 2-octaprenylphenol, an intermediate step in ubiquinone biosynthesis. The sequence is that of 3-octaprenyl-4-hydroxybenzoate carboxy-lyase from Dechloromonas aromatica (strain RCB).